The chain runs to 473 residues: Zinc finger and BTB domain-containing protein 9 (473 aa).

The BTB domain maps to 48 to 112; the sequence is CDVSLLVQGR…IYSGRLRLPL (65 aa). Residues 177-279 form a disordered region; sequence QTPVQSSAST…LELPAPPALP (103 aa). Positions 182-196 are enriched in low complexity; it reads SSASTESPASTESPV. A compositionally biased stretch (acidic residues) spans 211-226; that stretch reads VEEEEEEEEDDDDEDQ. The segment covering 227 to 239 has biased composition (polar residues); that stretch reads GSATLSQTPQPQR. Lys-286 participates in a covalent cross-link: Glycyl lysine isopeptide (Lys-Gly) (interchain with G-Cter in SUMO1); alternate. Lys-286 is covalently cross-linked (Glycyl lysine isopeptide (Lys-Gly) (interchain with G-Cter in SUMO2); alternate). Residues Lys-293 and Lys-307 each participate in a glycyl lysine isopeptide (Lys-Gly) (interchain with G-Cter in SUMO2) cross-link. Positions 293-376 are disordered; it reads KEEISGSGTQ…VHGPVKLGGT (84 aa). Positions 355–364 are enriched in gly residues; sequence SGGGGPGGAG. A Glycyl lysine isopeptide (Lys-Gly) (interchain with G-Cter in SUMO2) cross-link involves residue Lys-382. The C2H2-type 1 zinc-finger motif lies at 411–433; that stretch reads FGCGICNKRFKLKHHLTEHMKTH. The C2H2-type 2; atypical zinc finger occupies 438–460; it reads HACPHCGRRFRVHACFLRHRDLC.

It is found in the nucleus. In terms of biological role, may be involved in transcriptional regulation. In Homo sapiens (Human), this protein is Zinc finger and BTB domain-containing protein 9 (ZBTB9).